The sequence spans 198 residues: A-type ATP synthase subunit E (198 aa).

The protein belongs to the V-ATPase E subunit family. Has multiple subunits with at least A(3), B(3), C, D, E, F, H, I and proteolipid K(x).

The protein resides in the cell membrane. Functionally, component of the A-type ATP synthase that produces ATP from ADP in the presence of a proton gradient across the membrane. In Pyrococcus furiosus (strain ATCC 43587 / DSM 3638 / JCM 8422 / Vc1), this protein is A-type ATP synthase subunit E.